The sequence spans 254 residues: Imidazole glycerol phosphate synthase subunit HisF (254 aa).

Catalysis depends on residues aspartate 13 and aspartate 132.

The protein belongs to the HisA/HisF family. As to quaternary structure, heterodimer of HisH and HisF.

The protein localises to the cytoplasm. The catalysed reaction is 5-[(5-phospho-1-deoxy-D-ribulos-1-ylimino)methylamino]-1-(5-phospho-beta-D-ribosyl)imidazole-4-carboxamide + L-glutamine = D-erythro-1-(imidazol-4-yl)glycerol 3-phosphate + 5-amino-1-(5-phospho-beta-D-ribosyl)imidazole-4-carboxamide + L-glutamate + H(+). The protein operates within amino-acid biosynthesis; L-histidine biosynthesis; L-histidine from 5-phospho-alpha-D-ribose 1-diphosphate: step 5/9. Its function is as follows. IGPS catalyzes the conversion of PRFAR and glutamine to IGP, AICAR and glutamate. The HisF subunit catalyzes the cyclization activity that produces IGP and AICAR from PRFAR using the ammonia provided by the HisH subunit. In Sulfurovum sp. (strain NBC37-1), this protein is Imidazole glycerol phosphate synthase subunit HisF.